Here is a 597-residue protein sequence, read N- to C-terminus: Elongation factor 4 (597 aa).

In terms of domain architecture, tr-type G spans 2-184; it reads QHIRNFSIIA…AVISRIPPPK (183 aa). Residues 14-19 and 131-134 each bind GTP; these read DHGKST and NKID.

The protein belongs to the TRAFAC class translation factor GTPase superfamily. Classic translation factor GTPase family. LepA subfamily.

The protein resides in the cell inner membrane. The catalysed reaction is GTP + H2O = GDP + phosphate + H(+). In terms of biological role, required for accurate and efficient protein synthesis under certain stress conditions. May act as a fidelity factor of the translation reaction, by catalyzing a one-codon backward translocation of tRNAs on improperly translocated ribosomes. Back-translocation proceeds from a post-translocation (POST) complex to a pre-translocation (PRE) complex, thus giving elongation factor G a second chance to translocate the tRNAs correctly. Binds to ribosomes in a GTP-dependent manner. In Nitrosospira multiformis (strain ATCC 25196 / NCIMB 11849 / C 71), this protein is Elongation factor 4.